A 525-amino-acid polypeptide reads, in one-letter code: GMP synthase [glutamine-hydrolyzing] (525 aa).

One can recognise a Glutamine amidotransferase type-1 domain in the interval 9 to 207; that stretch reads RILILDFGSQ…VRDICQCEAL (199 aa). Catalysis depends on cysteine 86, which acts as the Nucleophile. Active-site residues include histidine 181 and glutamate 183. The GMPS ATP-PPase domain maps to 208–400; that stretch reads WTPAKIIDDA…LGLPYDMLYR (193 aa). Residue 235–241 participates in ATP binding; that stretch reads SGGVDSS.

In terms of assembly, homodimer.

The catalysed reaction is XMP + L-glutamine + ATP + H2O = GMP + L-glutamate + AMP + diphosphate + 2 H(+). It functions in the pathway purine metabolism; GMP biosynthesis; GMP from XMP (L-Gln route): step 1/1. Catalyzes the synthesis of GMP from XMP. The chain is GMP synthase [glutamine-hydrolyzing] from Escherichia coli (strain K12 / MC4100 / BW2952).